A 144-amino-acid chain; its full sequence is Maximins 3/H11 type 2 (144 aa).

Positions 1-18 (MHFKYIVAVSFLIASAYA) are cleaved as a signal peptide. 2 consecutive propeptides follow at residues 19–43 (RSVQNDEQSLSQRDVLEEESLREIR) and 73–122 (RTAE…KKEK). At I143 the chain carries Isoleucine amide.

It belongs to the bombinin family. As to expression, expressed by the skin glands.

The protein resides in the secreted. Functionally, maximin-3 shows antibacterial activity against both Gram-positive and Gram-negative bacteria. It also shows antimicrobial activity against the fungus C.albicans, but not against A.flavus nor P.uticale. It has little hemolytic activity. It possess a significant cytotoxicity against tumor cell lines. It possess a significant anti-HIV activity. It shows high spermicidal activity. Its function is as follows. Maximin-H11 shows antimicrobial activity against bacteria and against the fungus C.albicans. Shows strong hemolytic activity. The polypeptide is Maximins 3/H11 type 2 (Bombina maxima (Giant fire-bellied toad)).